The following is a 215-amino-acid chain: ATP-dependent dethiobiotin synthetase BioD (215 aa).

An ATP-binding site is contributed by D13 to V18. T17 is a binding site for Mg(2+). K38 is a catalytic residue. Residue T42 coordinates substrate. ATP contacts are provided by residues D50, E115–G118, and N175–H176. 2 residues coordinate Mg(2+): D50 and E115.

This sequence belongs to the dethiobiotin synthetase family. Homodimer. Mg(2+) is required as a cofactor.

It localises to the cytoplasm. It carries out the reaction (7R,8S)-7,8-diammoniononanoate + CO2 + ATP = (4R,5S)-dethiobiotin + ADP + phosphate + 3 H(+). It functions in the pathway cofactor biosynthesis; biotin biosynthesis; biotin from 7,8-diaminononanoate: step 1/2. In terms of biological role, catalyzes a mechanistically unusual reaction, the ATP-dependent insertion of CO2 between the N7 and N8 nitrogen atoms of 7,8-diaminopelargonic acid (DAPA, also called 7,8-diammoniononanoate) to form a ureido ring. The protein is ATP-dependent dethiobiotin synthetase BioD of Neisseria meningitidis serogroup C (strain 053442).